The chain runs to 419 residues: Gamma-glutamyl phosphate reductase (419 aa).

The protein belongs to the gamma-glutamyl phosphate reductase family.

It localises to the cytoplasm. The catalysed reaction is L-glutamate 5-semialdehyde + phosphate + NADP(+) = L-glutamyl 5-phosphate + NADPH + H(+). It participates in amino-acid biosynthesis; L-proline biosynthesis; L-glutamate 5-semialdehyde from L-glutamate: step 2/2. Its function is as follows. Catalyzes the NADPH-dependent reduction of L-glutamate 5-phosphate into L-glutamate 5-semialdehyde and phosphate. The product spontaneously undergoes cyclization to form 1-pyrroline-5-carboxylate. The chain is Gamma-glutamyl phosphate reductase from Azoarcus sp. (strain BH72).